Reading from the N-terminus, the 367-residue chain is Quinolinate synthase (367 aa).

Residues H45 and S62 each coordinate iminosuccinate. A [4Fe-4S] cluster-binding site is contributed by C109. Iminosuccinate contacts are provided by residues 140 to 142 and S161; that span reads YVN. A [4Fe-4S] cluster-binding site is contributed by C229. Iminosuccinate contacts are provided by residues 255–257 and T272; that span reads HPE. C319 lines the [4Fe-4S] cluster pocket.

Belongs to the quinolinate synthase family. Type 3 subfamily. [4Fe-4S] cluster is required as a cofactor.

It localises to the cytoplasm. It catalyses the reaction iminosuccinate + dihydroxyacetone phosphate = quinolinate + phosphate + 2 H2O + H(+). It functions in the pathway cofactor biosynthesis; NAD(+) biosynthesis; quinolinate from iminoaspartate: step 1/1. Catalyzes the condensation of iminoaspartate with dihydroxyacetone phosphate to form quinolinate. The polypeptide is Quinolinate synthase (Lysinibacillus sphaericus (strain C3-41)).